The chain runs to 444 residues: MFS-type transporter dbaD (444 aa).

Residues 1–13 (MTEQPPQNHSVDL) show a composition bias toward polar residues. Residues 1–57 (MTEQPPQNHSVDLNQNEDNNENDYRSSSATDAERPCEPKIEESTAKPPTGPPAPPPP) form a disordered region. An N-linked (GlcNAc...) asparagine glycan is attached at N8. Residues 31–44 (DAERPCEPKIEEST) are compositionally biased toward basic and acidic residues. Residues 48-57 (PTGPPAPPPP) are compositionally biased toward pro residues. 11 helical membrane passes run 62–82 (LVAW…WGIM), 107–127 (WIGS…GSIY), 134–154 (ALLV…SLCK), 159–179 (VLLA…VPCV), 192–212 (TALG…PIVL), 223–243 (WSVR…IAVM), 267–287 (MAFT…LFYI), 301–323 (MAFY…PNAM), 330–350 (FNLI…LLAV), 356–376 (LIVI…LPPL), and 394–414 (MGFG…GAIL). N421 carries N-linked (GlcNAc...) asparagine glycosylation. The chain crosses the membrane as a helical span at residues 424–444 (GLWVYGGVTSLVAGFIICIAV).

It belongs to the major facilitator superfamily. Monocarboxylate porter (TC 2.A.1.13) family.

It localises to the cell membrane. MFS-type transporter; part of the gene cluster that mediates the biosynthesis of the antibiotic 2,4- dihydroxy-3-methyl-6-(2-oxopropyl)benzaldehyde (DHMBA) and its derivatives. Is probably involved in the transport of the metabolites to the environment. This Emericella nidulans (strain FGSC A4 / ATCC 38163 / CBS 112.46 / NRRL 194 / M139) (Aspergillus nidulans) protein is MFS-type transporter dbaD.